Consider the following 124-residue polypeptide: Small ribosomal subunit protein uS13 (124 aa).

A disordered region spans residues His91–Lys124.

This sequence belongs to the universal ribosomal protein uS13 family. As to quaternary structure, part of the 30S ribosomal subunit. Forms a loose heterodimer with protein S19. Forms two bridges to the 50S subunit in the 70S ribosome.

Functionally, located at the top of the head of the 30S subunit, it contacts several helices of the 16S rRNA. In the 70S ribosome it contacts the 23S rRNA (bridge B1a) and protein L5 of the 50S subunit (bridge B1b), connecting the 2 subunits; these bridges are implicated in subunit movement. Contacts the tRNAs in the A and P-sites. The chain is Small ribosomal subunit protein uS13 from Acholeplasma laidlawii (strain PG-8A).